We begin with the raw amino-acid sequence, 445 residues long: Dolichyl-diphosphooligosaccharide--protein glycosyltransferase 48 kDa subunit (445 aa).

The N-terminal stretch at 1–32 (MRRRRKMEAGAAARAWSLLWLLLPLLGPVCAS) is a signal peptide. Residues 33–415 (GPRTLVLLDN…QYERFIPSAY (383 aa)) lie on the Lumenal side of the membrane. A helical transmembrane segment spans residues 416 to 436 (PYYASAFSMMLGLFIFSTVFL). Topologically, residues 437–445 (HMKEKEKSD) are cytoplasmic.

The protein belongs to the DDOST 48 kDa subunit family. Component of the oligosaccharyltransferase (OST) complex. OST exists in two different complex forms which contain common core subunits RPN1, RPN2, OST48, OST4, DAD1 and TMEM258, either STT3A or STT3B as catalytic subunits, and form-specific accessory subunits. STT3A complex assembly occurs through the formation of 3 subcomplexes. Subcomplex 1 contains RPN1 and TMEM258, subcomplex 2 contains the STT3A-specific subunits STT3A, DC2/OSTC, and KCP2 as well as the core subunit OST4, and subcomplex 3 contains RPN2, DAD1, and OST48. The STT3A complex can form stable complexes with the Sec61 complex or with both the Sec61 and TRAP complexes. Interacts with SMIM22.

The protein localises to the endoplasmic reticulum. It localises to the endoplasmic reticulum membrane. Its pathway is protein modification; protein glycosylation. Functionally, subunit of the oligosaccharyl transferase (OST) complex that catalyzes the initial transfer of a defined glycan (Glc(3)Man(9)GlcNAc(2) in eukaryotes) from the lipid carrier dolichol-pyrophosphate to an asparagine residue within an Asn-X-Ser/Thr consensus motif in nascent polypeptide chains, the first step in protein N-glycosylation. N-glycosylation occurs cotranslationally and the complex associates with the Sec61 complex at the channel-forming translocon complex that mediates protein translocation across the endoplasmic reticulum (ER). All subunits are required for a maximal enzyme activity. Required for the assembly of both SST3A- and SS3B-containing OST complexes. The sequence is that of Dolichyl-diphosphooligosaccharide--protein glycosyltransferase 48 kDa subunit from Canis lupus familiaris (Dog).